We begin with the raw amino-acid sequence, 708 residues long: Probable GTP diphosphokinase RSH3, chloroplastic (708 aa).

Disordered stretches follow at residues Met1–Gly50 and His109–Ala134. The transit peptide at Met1–Pro58 directs the protein to the chloroplast. 2 stretches are compositionally biased toward low complexity: residues Ser29–Ser41 and Pro118–Ser131. The HD domain maps to Tyr233 to Met337.

It belongs to the RelA/SpoT family.

The protein resides in the plastid. It is found in the chloroplast. It catalyses the reaction GTP + ATP = guanosine 3'-diphosphate 5'-triphosphate + AMP. Functionally, probable ppGpp (guanosine 3'-diphosphate 5'-diphosphate) synthetase that may be involved in a rapid plant ppGpp-mediated response to pathogens and other stresses. In Oryza sativa subsp. japonica (Rice), this protein is Probable GTP diphosphokinase RSH3, chloroplastic (RSH3).